Here is a 106-residue protein sequence, read N- to C-terminus: Urease subunit beta (106 aa).

It belongs to the urease beta subunit family. As to quaternary structure, heterotrimer of UreA (gamma), UreB (beta) and UreC (alpha) subunits. Three heterotrimers associate to form the active enzyme.

It is found in the cytoplasm. It carries out the reaction urea + 2 H2O + H(+) = hydrogencarbonate + 2 NH4(+). It participates in nitrogen metabolism; urea degradation; CO(2) and NH(3) from urea (urease route): step 1/1. The protein is Urease subunit beta of Acinetobacter baumannii (strain ATCC 17978 / DSM 105126 / CIP 53.77 / LMG 1025 / NCDC KC755 / 5377).